A 296-amino-acid chain; its full sequence is Acetylglutamate kinase (296 aa).

Substrate-binding positions include 69 to 70 (GG), R91, and N193.

This sequence belongs to the acetylglutamate kinase family. ArgB subfamily.

It is found in the cytoplasm. The enzyme catalyses N-acetyl-L-glutamate + ATP = N-acetyl-L-glutamyl 5-phosphate + ADP. Its pathway is amino-acid biosynthesis; L-arginine biosynthesis; N(2)-acetyl-L-ornithine from L-glutamate: step 2/4. Its function is as follows. Catalyzes the ATP-dependent phosphorylation of N-acetyl-L-glutamate. This Verminephrobacter eiseniae (strain EF01-2) protein is Acetylglutamate kinase.